The primary structure comprises 202 residues: ATP-dependent Clp protease proteolytic subunit (202 aa).

S106 serves as the catalytic Nucleophile. Residue H131 is part of the active site.

This sequence belongs to the peptidase S14 family. In terms of assembly, fourteen ClpP subunits assemble into 2 heptameric rings which stack back to back to give a disk-like structure with a central cavity, resembling the structure of eukaryotic proteasomes.

It is found in the cytoplasm. It catalyses the reaction Hydrolysis of proteins to small peptides in the presence of ATP and magnesium. alpha-casein is the usual test substrate. In the absence of ATP, only oligopeptides shorter than five residues are hydrolyzed (such as succinyl-Leu-Tyr-|-NHMec, and Leu-Tyr-Leu-|-Tyr-Trp, in which cleavage of the -Tyr-|-Leu- and -Tyr-|-Trp bonds also occurs).. Its function is as follows. Cleaves peptides in various proteins in a process that requires ATP hydrolysis. Has a chymotrypsin-like activity. Plays a major role in the degradation of misfolded proteins. In Shewanella sp. (strain ANA-3), this protein is ATP-dependent Clp protease proteolytic subunit.